The sequence spans 611 residues: Protein decapping 5 (611 aa).

The 84-residue stretch at 9-92 (KSSSAADSYV…IKDLQVKASP (84 aa)) folds into the Sm domain. Disordered stretches follow at residues 111 to 153 (HYPS…AMPL), 183 to 238 (GLPQ…PSSL), 264 to 301 (SSSLQSTLQSAPSPSLASEMAPPLLSNKAPITAPPTLP), 318 to 362 (EAST…DKPK), 396 to 455 (QVSS…AGRS), and 519 to 611 (FFDS…NRTT). 2 stretches are compositionally biased toward polar residues: residues 117–140 (PTSGSLPSTASGSLPDISSHNGQP) and 203–214 (NSLQQPLQYPNF). The segment covering 264–281 (SSSLQSTLQSAPSPSLAS) has biased composition (low complexity). 3 stretches are compositionally biased toward polar residues: residues 318–330 (EASTGLPLSNKPS), 396–413 (QVSSSAGLEQSVPVTSEA), and 424–437 (ARPTQKPNGHSFPN). Positions 441-453 (YRGRGRGRGRGAG) are enriched in basic residues. The DFDF domain occupies 453 to 489 (GRSHQVMKFTEDFDFTAMNEKFNKDEVWGHLGKSTTL). Positions 512-527 (PVYNKDDFFDSLSSNT) match the FFD box motif. Basic and acidic residues predominate over residues 528 to 547 (IDRESQNSRPRFSEQRKLDT). Positions 534–554 (NSRPRFSEQRKLDTETFGEFS) match the TFG box motif. Residues 559–604 (GRGGRGGYGRNNGYSRGGYGGRGYGGYGGRGGGGGGYGYGGRGQGR) show a composition bias toward gly residues.

It belongs to the LSM14 family. Homodimer. Component of the decapping complex. Interacts with DCP1 and DCP2.

Its subcellular location is the cytoplasm. The protein localises to the P-body. Functionally, as a component of the decapping complex, involved in the degradation of mRNAs. Promotes P-body formation. Translational repressor. The chain is Protein decapping 5 (DCP5) from Arabidopsis thaliana (Mouse-ear cress).